We begin with the raw amino-acid sequence, 120 residues long: Ribosome-binding factor A (120 aa).

It belongs to the RbfA family. As to quaternary structure, monomer. Binds 30S ribosomal subunits, but not 50S ribosomal subunits or 70S ribosomes.

The protein localises to the cytoplasm. Functionally, one of several proteins that assist in the late maturation steps of the functional core of the 30S ribosomal subunit. Associates with free 30S ribosomal subunits (but not with 30S subunits that are part of 70S ribosomes or polysomes). Required for efficient processing of 16S rRNA. May interact with the 5'-terminal helix region of 16S rRNA. The sequence is that of Ribosome-binding factor A from Verminephrobacter eiseniae (strain EF01-2).